Here is a 532-residue protein sequence, read N- to C-terminus: Phosphoenolpyruvate carboxykinase (ATP) (532 aa).

Substrate is bound by residues arginine 60, tyrosine 195, and lysine 201. ATP-binding positions include lysine 201, histidine 221, and 237-245 (GLSGTGKTT). Lysine 201 and histidine 221 together coordinate Mn(2+). Aspartate 258 lines the Mn(2+) pocket. Residues glutamate 287, arginine 323, and threonine 448 each coordinate ATP. Arginine 323 contributes to the substrate binding site.

This sequence belongs to the phosphoenolpyruvate carboxykinase (ATP) family. Requires Mn(2+) as cofactor.

The protein resides in the cytoplasm. The catalysed reaction is oxaloacetate + ATP = phosphoenolpyruvate + ADP + CO2. It functions in the pathway carbohydrate biosynthesis; gluconeogenesis. Involved in the gluconeogenesis. Catalyzes the conversion of oxaloacetate (OAA) to phosphoenolpyruvate (PEP) through direct phosphoryl transfer between the nucleoside triphosphate and OAA. The chain is Phosphoenolpyruvate carboxykinase (ATP) from Christiangramia forsetii (strain DSM 17595 / CGMCC 1.15422 / KT0803) (Gramella forsetii).